A 223-amino-acid chain; its full sequence is Ribose-5-phosphate isomerase A (223 aa).

Substrate is bound by residues 32-35 (TGST), 85-88 (DGAD), and 98-101 (KGGG). E107 acts as the Proton acceptor in catalysis. K125 serves as a coordination point for substrate.

This sequence belongs to the ribose 5-phosphate isomerase family. Homodimer.

The catalysed reaction is aldehydo-D-ribose 5-phosphate = D-ribulose 5-phosphate. Its pathway is carbohydrate degradation; pentose phosphate pathway; D-ribose 5-phosphate from D-ribulose 5-phosphate (non-oxidative stage): step 1/1. In terms of biological role, catalyzes the reversible conversion of ribose-5-phosphate to ribulose 5-phosphate. This Pseudomonas savastanoi pv. phaseolicola (strain 1448A / Race 6) (Pseudomonas syringae pv. phaseolicola (strain 1448A / Race 6)) protein is Ribose-5-phosphate isomerase A.